The following is a 298-amino-acid chain: Glutamyl-Q tRNA(Asp) synthetase (298 aa).

L-glutamate contacts are provided by residues 8–12 and Glu-44; that span reads RFAPS. A 'HIGH' region motif is present at residues 11–21; it reads PSPTGPLHFGS. Residues Cys-100, Cys-102, Tyr-123, and Cys-127 each coordinate Zn(2+). L-glutamate-binding residues include Tyr-183 and Arg-201. The 'KMSKS' region motif lies at 239–243; the sequence is KLSKQ. ATP is bound at residue Lys-242.

This sequence belongs to the class-I aminoacyl-tRNA synthetase family. GluQ subfamily. It depends on Zn(2+) as a cofactor.

In terms of biological role, catalyzes the tRNA-independent activation of glutamate in presence of ATP and the subsequent transfer of glutamate onto a tRNA(Asp). Glutamate is transferred on the 2-amino-5-(4,5-dihydroxy-2-cyclopenten-1-yl) moiety of the queuosine in the wobble position of the QUC anticodon. The protein is Glutamyl-Q tRNA(Asp) synthetase of Burkholderia orbicola (strain AU 1054).